Consider the following 370-residue polypeptide: Molybdenum import ATP-binding protein ModC (370 aa).

Positions 2 to 233 constitute an ABC transporter domain; the sequence is SVRVDIGHRL…LDLLPAEERG (232 aa). 31 to 38 lines the ATP pocket; the sequence is GPSGSGKT. Residues 293 to 359 form the Mop domain; it reads GLSALNILPG…VKTVSFDRAN (67 aa).

The protein belongs to the ABC transporter superfamily. Molybdate importer (TC 3.A.1.8) family. As to quaternary structure, the complex is composed of two ATP-binding proteins (ModC), two transmembrane proteins (ModB) and a solute-binding protein (ModA).

The protein localises to the cell inner membrane. It carries out the reaction molybdate(out) + ATP + H2O = molybdate(in) + ADP + phosphate + H(+). Its function is as follows. Part of the ABC transporter complex ModABC involved in molybdenum import. Responsible for energy coupling to the transport system. The protein is Molybdenum import ATP-binding protein ModC of Mesorhizobium japonicum (strain LMG 29417 / CECT 9101 / MAFF 303099) (Mesorhizobium loti (strain MAFF 303099)).